Consider the following 159-residue polypeptide: Neuroglobin (159 aa).

Positions 3 to 151 (KLSEKDKGLI…VVSAMTRGWA (149 aa)) constitute a Globin domain. His-66 and His-98 together coordinate heme b.

It belongs to the globin family. Monomer. Homodimers and homotetramers. Mainly monomeric but also detected as part of homodimers and homotetramers. Detected in brain, eye and gill, but not in muscle and blood (at protein level). Particularly high expression in the periventral zone of tectum opticum, with significant expression detected in white matter, preglomerular nucleus, posterior tubular nucleus, torus longitudinalis, hypothalamus, pituitary gland, posterior tuberculum, hypothalamus, synencephalon and formatio reticularis. Detected also in brain regions of the visual system, predominantly in parts of tectum opticum and torus semicircularis, area dorsalis telencephali and medulla oblongata. Strong expression observed in sensory epithelium of peripheral olfactory organ, and outer and inner nuclear layers and ganglion cell layer of retina.

It is found in the cytoplasm. The protein localises to the cytosol. Its subcellular location is the mitochondrion matrix. It carries out the reaction Fe(III)-heme b-[protein] + nitric oxide + H2O = Fe(II)-heme b-[protein] + nitrite + 2 H(+). Monomeric globin with a bis-histidyl six-coordinate heme-iron atom through which it can bind dioxygen, carbon monoxide and nitric oxide. Could help transport oxygen and increase its availability to the metabolically active neuronal tissues, though its low quantity in tissues as well as its high affinity for dioxygen, which may limit its oxygen-releasing ability, argue against it. The ferrous/deoxygenated form exhibits a nitrite reductase activity and it could produce nitric oxide which in turn inhibits cellular respiration in response to hypoxia. In its ferrous/deoxygenated state, it may also exhibit GDI (Guanine nucleotide Dissociation Inhibitor) activity toward heterotrimeric G-alpha proteins, thereby regulating signal transduction to facilitate neuroprotective responses in the wake of hypoxia and associated oxidative stress. This is Neuroglobin (ngb) from Danio rerio (Zebrafish).